The following is a 472-amino-acid chain: Squamosa promoter-binding-like protein 18 (472 aa).

The interval 89–110 (AKVPPSTSTLKRPRGGGGGGGG) is disordered. The SBP-type zinc finger occupies 112–189 (CPSCAVDGCK…DGHNRRRRKP (78 aa)). Zn(2+) is bound by residues Cys115, Cys120, Cys137, His140, Cys156, Cys159, His163, and Cys175. The Bipartite nuclear localization signal motif lies at 172–188 (KRSCRKRLDGHNRRRRK). Disordered stretches follow at residues 179 to 218 (LDGH…RPEP), 233 to 261 (SHHH…TAAF), and 358 to 381 (SVDV…HHHH). Polar residues predominate over residues 192–209 (DSMSSGSFMTSQQGTRFA). The segment covering 252-261 (SPSSATTAAF) has biased composition (low complexity).

Expressed in young panicles.

The protein localises to the nucleus. Its function is as follows. Trans-acting factor that binds specifically to the consensus nucleotide sequence 5'-TNCGTACAA-3'. May be involved in panicle development. This Oryza sativa subsp. japonica (Rice) protein is Squamosa promoter-binding-like protein 18 (SPL18).